The chain runs to 305 residues: Protein ORANGE, chloroplastic (305 aa).

Residues Met1–Ser54 constitute a chloroplast transit peptide. 2 helical membrane-spanning segments follow: residues Val144–Ala164 and Ile197–Val217. Positions Val206–His297 are CR-type-like. A CXXCXGXG motif repeat occupies Cys228–Gly235. The stretch at Cys239–Gly246 is one CXXCXXXG motif repeat. A CXXCXGXG motif repeat occupies Cys272–Gly279. Residues Cys283 to Gly290 form a CXXCXXXG motif repeat.

The protein belongs to the orange-like family. As to quaternary structure, interacts with ERF1-2. As to expression, expressed in young leaves, curds and flower buds.

The protein localises to the plastid. It is found in the chloroplast membrane. Its subcellular location is the nucleus. Functionally, involved in chromoplast differentiation. Is associated with a cellular process that triggers the differentiation of pro-plastids or other non-colored plastids into chromoplasts for carotenoid accumulation. Associated with carotenoid accumulation in de-etiolated cotyledons. Controls leaf petiole elongation by suppressing the expression of ERF1 genes. The chain is Protein ORANGE, chloroplastic from Brassica oleracea var. botrytis (Cauliflower).